The chain runs to 317 residues: tRNA uridine(34) hydroxylase (317 aa).

The 95-residue stretch at 129-223 folds into the Rhodanese domain; sequence TDPEVLLIDT…YLEEVPEQES (95 aa). Catalysis depends on Cys-183, which acts as the Cysteine persulfide intermediate. Residues 298-317 are disordered; the sequence is AKARNQPHPIGRNYRLPSEA.

Belongs to the TrhO family.

The enzyme catalyses uridine(34) in tRNA + AH2 + O2 = 5-hydroxyuridine(34) in tRNA + A + H2O. Its function is as follows. Catalyzes oxygen-dependent 5-hydroxyuridine (ho5U) modification at position 34 in tRNAs. The chain is tRNA uridine(34) hydroxylase from Pseudomonas syringae pv. tomato (strain ATCC BAA-871 / DC3000).